The sequence spans 534 residues: Cytochrome P450 monooxygenase CYP4 (534 aa).

The chain crosses the membrane as a helical span at residues 46–66 (TIIFCVLMSLVGYIVSRIIWG). N-linked (GlcNAc...) asparagine glycosylation occurs at asparagine 220. A heme-binding site is contributed by cysteine 477. Asparagine 515 carries an N-linked (GlcNAc...) asparagine glycan.

It belongs to the cytochrome P450 family. Heme is required as a cofactor.

The protein resides in the membrane. It participates in secondary metabolite biosynthesis. Its function is as follows. Cytochrome P450 monooxygenase; part of the gene cluster that mediates the biosynthesis of a tyrosine-derived cytochalasan acting as a fungal signal recognized by resistant rice plants and leads to avirulence in Pi33 resistant rice cultivars. The first step in the pathway is catalyzed by the hybrid PKS-NRPS ACE1, assisted by the enoyl reductase RAP1, that are responsible for fusion of the tyrosine precursor and the polyketide backbone. The polyketide synthase module (PKS) of ACE1 is responsible for the synthesis of the polyketide backbone and the downstream nonribosomal peptide synthetase (NRPS) amidates the carboxyl end of the polyketide with the tyrosine precursor. Because ACE1 lacks a designated enoylreductase (ER) domain, the required activity is provided the enoyl reductase RAP1. Reduction by the hydrolyase ORFZ, followed by dehydration and intra-molecular Diels-Alder cyclization by the Diels-Alderase ORF3 then yield the required isoindolone-fused macrocycle. A number of oxidative steps catalyzed by the tailoring enzymes identified within the cluster, including cytochrome P450 monooxygenases CYP1 to CYP4, the FAD-linked oxidoreductase OXR2 and the short-chain dehydrogenase/reductase OXR1, are further required to afford the final cytochalasans that confer avirulence and which have still to be identified. The monooxygenase CYP1 has been shown to be a site-selective C-18 hydroxylase whereas the function of CYP3 is the site-selective epoxidation of the C-6/C-7 olefin that is present in some intermediate compounds. Finally, SYN2 and RAP2 are not required for avirulence in Pi33 resistant rice cultivars. The protein is Cytochrome P450 monooxygenase CYP4 of Pyricularia oryzae (strain 70-15 / ATCC MYA-4617 / FGSC 8958) (Rice blast fungus).